The primary structure comprises 187 residues: Early E3 20.6 kDa glycoprotein (187 aa).

N-linked (GlcNAc...) asparagine; by host glycosylation is found at Asn-30, Asn-73, Asn-117, Asn-134, and Asn-135.

This sequence belongs to the adenoviridae E3_20 family.

In Human adenovirus B serotype 11 (strain Slobiski) (HAdV-11), this protein is Early E3 20.6 kDa glycoprotein.